Consider the following 480-residue polypeptide: Cysteine--tRNA ligase (480 aa).

Cysteine 29 is a Zn(2+) binding site. A 'HIGH' region motif is present at residues 31–41 (PTVYGHAHLGH). Zn(2+) contacts are provided by cysteine 221, histidine 246, and glutamate 250. The 'KMSKS' region signature appears at 278–282 (KMGKS). Lysine 281 serves as a coordination point for ATP.

Belongs to the class-I aminoacyl-tRNA synthetase family. In terms of assembly, monomer. Zn(2+) is required as a cofactor.

It is found in the cytoplasm. The enzyme catalyses tRNA(Cys) + L-cysteine + ATP = L-cysteinyl-tRNA(Cys) + AMP + diphosphate. The protein is Cysteine--tRNA ligase of Chlorobium chlorochromatii (strain CaD3).